A 338-amino-acid chain; its full sequence is Trace amine-associated receptor 1 (338 aa).

The Extracellular portion of the chain corresponds to 1–24 (MPFCHNIINISCVKNNWSNDVRAS). Cystine bridges form between Cys4-Cys177, Cys12-Cys87, and Cys95-Cys181. 2 N-linked (GlcNAc...) asparagine glycosylation sites follow: Asn9 and Asn16. Residues 25–45 (LYSLMALIILTTLVGNLIVIV) form a helical membrane-spanning segment. Over 46–58 (SISHFKQLHTPTN) the chain is Cytoplasmic. A helical transmembrane segment spans residues 59 to 79 (WLIHSMATVDFLLGCLVMPYS). The Extracellular portion of the chain corresponds to 80 to 97 (MVRSAEHCWYFGEVFCKI). The helical transmembrane segment at 98-118 (HTSTDIMLSSASIFHLSFISI) threads the bilayer. 2-phenylethylamine is bound at residue Asp102. Residues 119–135 (DRYYAVCDPLRYKAKIN) lie on the Cytoplasmic side of the membrane. Residues 136–156 (ILVVCVMIFISWSVPAVFAFG) form a helical membrane-spanning segment. Residues 157 to 187 (MIFLELNFKGAEEIYYKHVHCRGGCSVFFSK) lie on the Extracellular side of the membrane. The helical transmembrane segment at 188-208 (ISGVLAFMTSFYIPGSIMLCI) threads the bilayer. Residues 209–251 (YYRIYLIAKEQARSINDANQKLQIGLEMKNGISQSKERKAVKT) lie on the Cytoplasmic side of the membrane. A helical transmembrane segment spans residues 252-272 (LGIVMGVFLICWCPFFVCTVI). Topologically, residues 273–286 (DPFLHYTIPPTLND) are extracellular. Residues 287–307 (VLIWFGYLNSTFNPMVYAFFY) form a helical membrane-spanning segment. Topologically, residues 308 to 338 (PWFRKALKMILFGKIFQKDSSRCKLFLESSS) are cytoplasmic.

It belongs to the G-protein coupled receptor 1 family.

It localises to the endomembrane system. The protein localises to the endoplasmic reticulum membrane. Its subcellular location is the cell membrane. Its function is as follows. Intracellular G-protein coupled receptor for trace amines, which recognizes endogenous amine-containing metabolites such as beta-phenylethylamine (beta-PEA), 3-iodothyronamine (T1AM), isoamylamine (IAA), cadaverine (CAD), cyclohexylamine (CHA), p-tyramine (p-TYR), trimethylamine (TMA), octopamine and tryptamine. Also functions as a receptor for various drugs and psychoactive substances, such as amphetamine and methamphetamine. Unresponsive to classical biogenic amines, such as epinephrine and histamine and only partially activated by dopamine and serotonin. Expressed in both the central and peripheral nervous system: TAAR1 activation regulates the activity of several neurotransmitter signaling pathways by (1) decreasing the basal firing rates of the neurons involved and by (2) lowering the sensitivity of receptors to neurotransmitters. Ligand binding causes a conformation change that triggers signaling via guanine nucleotide-binding proteins (G proteins) and modulates the activity of downstream effectors. TAAR1 is coupled with different G(i)/G(o)-, G(s)- or G(q)/G(11) classes of G alpha proteins depending on the ligand. CAD-binding is coupled to G(i)/G(o) G alpha proteins and mediates inhibition of adenylate cyclase activity. T1AM- or beta-PEA-binding is coupled to G(s) G alpha proteins and mediates activation of adenylate cyclase activity. CHA- or IAA-binding is coupled to G(q)/G(11) G alpha proteins and activates phospholipase C-beta, releasing diacylglycerol (DAG) and inositol 1,4,5-trisphosphate (IP3) second messengers. TMA-binding is coupled with all three G(i)/G(o)-, G(s)- or G(q)/G(11) G alpha protein subtypes. This Macaca mulatta (Rhesus macaque) protein is Trace amine-associated receptor 1 (TAAR1).